A 446-amino-acid chain; its full sequence is SPARC-related modular calcium-binding protein 2 (446 aa).

Residues 1 to 21 form the signal peptide; sequence MLLPQLCWLPLLAGLLPPVPA. The Kazal-like domain occupies 34–86; sequence QDKDKDCSLDCAGSPQKPLCASDGRTFLSRCEFQRAKCKDPQLEIAYRGNCKD. Intrachain disulfides connect C40–C71, C44–C64, C53–C84, C90–C113, C124–C131, and C133–C153. A Thyroglobulin type-1 1 domain is found at 87–153; sequence VSRCVAERKY…TAVAHKTPRC (67 aa). Residues 147–228 form a disordered region; it reads AHKTPRCPGS…EHQSALEEAK (82 aa). Basic and acidic residues predominate over residues 161–172; that stretch reads LPQREGTGKTDD. N206 carries an N-linked (GlcNAc...) asparagine glycan. Polar residues predominate over residues 206 to 216; it reads NKTNKNSVSSC. In terms of domain architecture, Thyroglobulin type-1 2 spans 213–281; sequence VSSCDQEHQS…TSTRYEQPKC (69 aa). 3 disulfides stabilise this stretch: C216–C240, C251–C258, and C260–C281. Residues 217–228 are compositionally biased toward basic and acidic residues; it reads DQEHQSALEEAK. EF-hand domains lie at 347–382 and 384–419; these read LEER…LRKK and KPKK…AKED. Residues D360, N362, S364, D366, E371, D397, N399, D401, S403, and E408 each contribute to the Ca(2+) site. A glycan (N-linked (GlcNAc...) asparagine) is linked at N362. Residues 416–446 form a disordered region; sequence AKEDGKADTKKRHTPRGHAESTSNRQPRKQG.

In terms of assembly, binds various proteins from the extracellular matrix.

The protein localises to the secreted. Its subcellular location is the extracellular space. It is found in the extracellular matrix. The protein resides in the basement membrane. Functionally, promotes matrix assembly and cell adhesiveness. Can stimulate endothelial cell proliferation, migration, as well as angiogenesis. The sequence is that of SPARC-related modular calcium-binding protein 2 (SMOC2) from Homo sapiens (Human).